Reading from the N-terminus, the 24-residue chain is GLLNGLALRLGKRALKKIIKRLCR.

Its function is as follows. Antimicrobial peptide, active against the Gram-negative bacterium E.coli K12-594 (MIC=3.12 ug/ml), the Gram-positive bacteria B.subtilis KCTC 3086 (MIC=3.12 ug/ml), S.aureus KCTC 1928 (MIC=25 ug/ml) and M.luteus KCTC 3063 (MIC=1.56 ug/ml), the antibiotic resistant bacteria methicillin-resistant S.aureus (MRSA) (MIC=25 ug/ml) and vancomycin-resistant Enterococci (VRE) (MIC=25 ug/ml), and the fungi C.albicans KCTC 7965 (MIC=50 ug/ml) and C.tropicalis KCTC 1925 (MIC=3.12 ug/ml). Has very low hemolytic activity on rat erythrocytes. The sequence is that of Cryptonin from Cryptotympana dubia (Korean horse cicada).